The sequence spans 446 residues: MGREIITLQAGQCGNQVGSQFWQQLCLEHGICPDGTLEDFATEGLDRKDVFFYQSDDTRYIPRAILLDLEPRVVNNILSDTYGSLYNPENIFVATDGGGAGNNWAHGYAHAEKIFEDIVDMIDREAEGSDSLEGFSLLHSIAGGTGSGLGSYLLERLNDRFPKKIVQTYSVFPNNRSVSDVVVQPYNSLLTLKRLTLNADAVVVLDNAALAHIAADRLHIQNPTFHQQNQLVSTVMSASTTTLRYPGYMNNDLVSIIASLIPTPRCHFLSTSYTPFTSQQVEDARTIRKTTVLDVMRRLLQPKNRMVSVNPGKQSCFISILNIIQGEADPNDVHKSLLRIRERKLATFIPWGPASIQVALSKKSPYIKTNHRVSGLMLANHTSIASLFKRTLDQYDRLRKRNAFLDQYRKESIFENSLDEFDNSREVVADLIREYEACEQPEYLSM.

A GTP-binding site is contributed by 142 to 148; sequence AGGTGSG.

This sequence belongs to the tubulin family.

The protein localises to the cytoplasm. Its subcellular location is the cytoskeleton. It is found in the microtubule organizing center. It localises to the spindle pole body. In terms of biological role, tubulin is the major constituent of microtubules. The gamma chain is found at microtubule organizing centers (MTOC) such as the spindle poles or the centrosome, suggesting that it is involved in the minus-end nucleation of microtubule assembly. This is Tubulin gamma chain (tug1) from Schizosaccharomyces japonicus (Fission yeast).